Reading from the N-terminus, the 364-residue chain is Glycine oxidase (364 aa).

Residues 12–13, 32–33, 40–41, 45–47, and Val-173 each bind FAD; these read VI, ER, AS, and GGI. Arg-302 contributes to the substrate binding site. 327-333 lines the FAD pocket; it reads HYRNGLV.

This sequence belongs to the DAO family. ThiO subfamily. In terms of assembly, monomer. The cofactor is FAD.

It carries out the reaction glycine + O2 + H2O = glyoxylate + H2O2 + NH4(+). It catalyses the reaction sarcosine + O2 + H2O = methylamine + glyoxylate + H2O2. The protein operates within cofactor biosynthesis; thiamine diphosphate biosynthesis. Functionally, catalyzes the oxidation of glycine, leading to glyoxyl imine and hydrogen peroxide as primary products; glyoxyl imine is used for the biosynthesis of the thiazole ring of thiamine. Otherwise, glyoxyl imine is spontaneously hydrolyzed in water to produce glyoxylate and ammonia. Can also use sarcosine (N-methylglycine) as substrate. This is Glycine oxidase from Pseudomonas aeruginosa (strain ATCC 15692 / DSM 22644 / CIP 104116 / JCM 14847 / LMG 12228 / 1C / PRS 101 / PAO1).